The chain runs to 425 residues: MVAQQKNLEGYVGFANLPNQVYRKSVKRGFEFTLMVVGESGLGKSTLINSLFLTDLYAPDYPGPSHRIKKTVQVEQSKVLIKEGGVQLLLTIVDTPGFGDAVDNSNCWQPVIDYIDSKFEDYLNAESRVNRRQMPDNRVQCCLYFIAPSGHGLKPLDIEFMKRLHEKVNIIPLIAKADTLTPEECQQFKKQIMKEIQEHKIKIYEFPETDDEEENKLVKKIKDGLPLAVVGSNTIIEVNGKRVRGRQYPWGVAEVENGEHCDFTILRNMLIRTHMQDLKDVTNNVHYENYRSRKLAAVTYNGVDNNKNKGQLTKYDTGEGMSPLAQMEEERREHVAKMKKMEMEMEQVFEMKVKEKVQKLKDSEAELQRRHEQMKKNLEAQHKELEEKRRQFEEEKVNWETQQRILEQQNTSRTLEKNKKKGKIF.

A Septin-type G domain is found at 28–297 (RGFEFTLMVV…ENYRSRKLAA (270 aa)). The G1 motif stretch occupies residues 38-45 (GESGLGKS). GTP-binding positions include 38–45 (GESGLGKS), Thr-71, Gly-97, 176–184 (KADTLTPEE), Gly-231, and Arg-246. The G3 motif stretch occupies residues 94–97 (DTPG). The interval 175–178 (AKAD) is G4 motif. Positions 324 to 421 (LAQMEEERRE…SRTLEKNKKK (98 aa)) form a coiled coil.

Belongs to the TRAFAC class TrmE-Era-EngA-EngB-Septin-like GTPase superfamily. Septin GTPase family. As to quaternary structure, monomer, and homodimer. Nucleotide binding promotes oligomerization. Can form heterooligomers with other family members and form filaments.

It is found in the cytoplasm. The protein localises to the chromosome. It localises to the centromere. Its subcellular location is the kinetochore. The protein resides in the cytoskeleton. It is found in the spindle. The protein localises to the cleavage furrow. It localises to the midbody. Its subcellular location is the cilium axoneme. Its function is as follows. Filament-forming cytoskeletal GTPase. Required for normal organization of the actin cytoskeleton. Required for normal progress through mitosis. Involved in cytokinesis. Plays a role in ciliogenesis and collective cell movements including convergent extension during gastrulation. Controls cell elongation but not polarization during convergent extension. This is Septin-7 from Xenopus laevis (African clawed frog).